The chain runs to 440 residues: Gamma-aminobutyric acid receptor subunit pi (440 aa).

The first 23 residues, methionine 1–glycine 23, serve as a signal peptide directing secretion. The Extracellular segment spans residues asparagine 24–asparagine 241. Residues asparagine 43, asparagine 102, and asparagine 145 are each glycosylated (N-linked (GlcNAc...) asparagine). An intrachain disulfide couples cysteine 160 to cysteine 174. Asparagine 196 and asparagine 228 each carry an N-linked (GlcNAc...) asparagine glycan. A helical membrane pass occupies residues valine 242–valine 262. Residues serine 263–serine 270 are Cytoplasmic-facing. The chain crosses the membrane as a helical span at residues valine 271–isoleucine 290. At glycine 291–cysteine 301 the chain is on the extracellular side. The chain crosses the membrane as a helical span at residues phenylalanine 302–leucine 322. At glutamate 323–lysine 419 the chain is on the cytoplasmic side. The helical transmembrane segment at leucine 420–phenylalanine 440 threads the bilayer.

Belongs to the ligand-gated ion channel (TC 1.A.9) family. Gamma-aminobutyric acid receptor (TC 1.A.9.5) subfamily. GABRP sub-subfamily. In terms of assembly, heteropentamer, formed by a combination of alpha (GABRA1-6), beta (GABRB1-3), gamma (GABRG1-3), delta (GABRD), epsilon (GABRE), rho (GABRR1-3), pi (GABRP) and theta (GABRQ) chains, each subunit exhibiting distinct physiological and pharmacological properties. Expressed in lungs, in alveolar epithelium.

The protein localises to the cell membrane. It localises to the apical cell membrane. The catalysed reaction is chloride(in) = chloride(out). Its function is as follows. Pi subunit of the heteropentameric ligand-gated chloride channel gated by gamma-aminobutyric acid (GABA). GABA-gated chloride channels, also named GABA(A) receptors (GABAAR), consist of five subunits arranged around a central pore and contain GABA active binding site(s) located at the alpha and beta subunit interfaces. When activated by GABA, GABAARs selectively allow the flow of chloride anions across the cell membrane down their electrochemical gradient. Pi-containing GABAARs are mostly located in peripheral tissues. In the uterus, pi subunits modulate uterus contraction by altering the sensitivity of GABAARs to pregnanolone. In the lungs, pi-containing GABAARs contribute to pulmonary fluid transport via luminal secretion of chloride. This chain is Gamma-aminobutyric acid receptor subunit pi, found in Rattus norvegicus (Rat).